The sequence spans 132 residues: Probable prefoldin subunit 4 (132 aa).

This sequence belongs to the prefoldin subunit beta family. As to quaternary structure, heterohexamer of two PFD-alpha type and four PFD-beta type subunits.

Functionally, binds specifically to cytosolic chaperonin (c-CPN) and transfers target proteins to it. Binds to nascent polypeptide chain and promotes folding in an environment in which there are many competing pathways for nonnative proteins. This chain is Probable prefoldin subunit 4 (pfdn4), found in Dictyostelium discoideum (Social amoeba).